Here is a 90-residue protein sequence, read N- to C-terminus: U7-theraphotoxin-Hhn1a 2 (90 aa).

An N-terminal signal peptide occupies residues 1-19 (MKIAIFTVVLALAVFAVLS). The propeptide occupies 20–50 (FGWEANEKALSEEFTELIHEKEAASETEARE). Intrachain disulfides connect Cys51-Cys65, Cys58-Cys70, and Cys64-Cys81.

The protein belongs to the neurotoxin 10 (Hwtx-1) family. 13 (Hntx-13) subfamily. Expressed by the venom gland.

The protein localises to the secreted. Functionally, ion channel inhibitor. In Cyriopagopus hainanus (Chinese bird spider), this protein is U7-theraphotoxin-Hhn1a 2.